Reading from the N-terminus, the 735-residue chain is Catalase-peroxidase (735 aa).

The span at 1–10 shows a compositional bias: polar residues; the sequence is MMDGAQTNSG. Positions 1–20 are disordered; the sequence is MMDGAQTNSGGCPVMHGGGS. Residues 100–228 constitute a cross-link (tryptophyl-tyrosyl-methioninium (Trp-Tyr) (with M-254)); it reads WHSAGTYRTY…LAAVQMGLIY (129 aa). The active-site Proton acceptor is the His-101. Residues 228-254 constitute a cross-link (tryptophyl-tyrosyl-methioninium (Tyr-Met) (with W-100)); sequence YVNPQGPDGNPDPLASAFDIRDTFARM. Residue His-269 participates in heme b binding.

Belongs to the peroxidase family. Peroxidase/catalase subfamily. Homodimer or homotetramer. Heme b is required as a cofactor. Formation of the three residue Trp-Tyr-Met cross-link is important for the catalase, but not the peroxidase activity of the enzyme.

It carries out the reaction H2O2 + AH2 = A + 2 H2O. The catalysed reaction is 2 H2O2 = O2 + 2 H2O. In terms of biological role, bifunctional enzyme with both catalase and broad-spectrum peroxidase activity. This is Catalase-peroxidase from Jannaschia sp. (strain CCS1).